The sequence spans 747 residues: Putative T-box protein 31 (747 aa).

The segment at residues 33 to 199 (QMLTKRKKTN…AGPAAKKTPD (167 aa)) is a DNA-binding region (T-box). 2 disordered regions span residues 268–289 (SLSS…DFDD) and 332–364 (SINN…VRDK). Residues 332–358 (SINNPGYLSTASSPAALNQDSSASEKS) are compositionally biased toward polar residues.

The protein resides in the nucleus. This is Putative T-box protein 31 (tbx-31) from Caenorhabditis elegans.